The following is a 467-amino-acid chain: MFFKEIVMNAVNASFTDYKVADISLADYGRKEIKLAEAEMPALIGLRKRYAAEKPLAGAKILGCIHMTIQTAVLIETLVELGAEVRWTSCNIFSTQDHAAAAIAASGVPVFAWKGETEEEYNWCLEQQINVNGKPWDANMILDDGGDLTALVHEKYPTLLDHIHGITEETTTGVQRLLEMWKDGSLKVPAINVNDSVTKSKNDNKYGCRHSLNDAIKRATDMLLSGRRALVIGYGDVGKGSAQSLRQEGMIVRVTEVDPICAMQACMDGYEVVSPYKNGVQTGKKEDINLDLLKNTDLIVTTTGNYHVCDSAMLDTLKAGAVVCNIGHFDTEIDTNYLRGYKWVEVKPQVHQVYRSENENDYLILLSEGRLVNLGNATGHPSRVMDGSFANQVLGQIHLFQEKFADLPASEKAAQIRVEVLPKKLDEEVAAAMVLGFGGVLTQLTSVQADYLGVPVEGPFKSDAYKY.

Substrate is bound by residues threonine 68, aspartate 144, and glutamate 169. 170 to 172 contributes to the NAD(+) binding site; it reads TTT. Positions 199 and 203 each coordinate substrate. Residues asparagine 204, 233-238, glutamate 256, asparagine 305, 326-328, and asparagine 373 contribute to the NAD(+) site; these read GYGDVG and IGH.

Belongs to the adenosylhomocysteinase family. The cofactor is NAD(+).

Its subcellular location is the cytoplasm. The catalysed reaction is S-adenosyl-L-homocysteine + H2O = L-homocysteine + adenosine. Its pathway is amino-acid biosynthesis; L-homocysteine biosynthesis; L-homocysteine from S-adenosyl-L-homocysteine: step 1/1. Its function is as follows. May play a key role in the regulation of the intracellular concentration of adenosylhomocysteine. The protein is Adenosylhomocysteinase of Acinetobacter baylyi (strain ATCC 33305 / BD413 / ADP1).